We begin with the raw amino-acid sequence, 342 residues long: MQSYTELVKLTEALMGARTSGIVKSSEHNCKICRSVIPLDDKNKIISILMAIKENVQLEMPEDIADVKLLDFLLFWKGKIEYSTVINELFNAHKGYFHHCYMVDIIAKRYARKLYKPESLEENKEWLALATKAGFMADSFFRKNNLYDLLHELTGKDVRPMIADDNLEKLTNMSASSESEIINNLIPMQLPQILALFEQILQKGAPKVVIEADGCVKVNHCIFETKTADNKVLIKIGMPIEYEHYNSFQSSYYGNGICRGSKHKMNVNVGRIYRAVKAVAPQVTFNFYSMKEETCQEVCGCVEKQCEIAKCAVEGIPFIPKELRAIPISKITRRGSMDMDIM.

This is an uncharacterized protein from Magallana gigas (Pacific oyster).